A 611-amino-acid chain; its full sequence is Chaperone protein DnaK (611 aa).

Thr173 carries the post-translational modification Phosphothreonine; by autocatalysis. Residues 579–592 are compositionally biased toward low complexity; it reads AAGQAEGAQGAQDA. The segment at 579-598 is disordered; that stretch reads AAGQAEGAQGAQDAGAKKDN.

It belongs to the heat shock protein 70 family.

Functionally, acts as a chaperone. The protein is Chaperone protein DnaK of Bacillus cereus (strain AH187).